Reading from the N-terminus, the 1220-residue chain is von Willebrand factor A domain-containing protein 5B1 (1220 aa).

Residues 1-18 (MPGLLNWITGAALPLTAS) form the signal peptide. The VIT domain maps to 19–149 (DVTSCVSGYA…NVTIFISTSS (131 aa)). N140 carries N-linked (GlcNAc...) asparagine glycosylation. Residues 361–529 (EFIFLIDRSS…RLQPKMVKSL (169 aa)) form the VWFA domain. The N-linked (GlcNAc...) asparagine glycan is linked to N650. Residues 715-807 (NSGQDLNQGP…SPSRPATPAP (93 aa)) form a disordered region. Positions 757 to 774 (VRERTSDSRSPGDLEPSH) are enriched in basic and acidic residues. The span at 796-807 (RASPSRPATPAP) shows a compositional bias: low complexity. Y881 bears the Phosphotyrosine mark. Disordered regions lie at residues 937-962 (RGTS…GKFQ) and 976-995 (EARS…QRSL). N1017 is a glycosylation site (N-linked (GlcNAc...) asparagine). The segment covering 1093-1111 (TTRPSESKTPSPQLCTSSP) has biased composition (polar residues). Positions 1093–1115 (TTRPSESKTPSPQLCTSSPPRHP) are disordered.

It is found in the secreted. The chain is von Willebrand factor A domain-containing protein 5B1 (VWA5B1) from Homo sapiens (Human).